Consider the following 386-residue polypeptide: Bifunctional enzyme IspD/IspF (386 aa).

The interval 1–225 is 2-C-methyl-D-erythritol 4-phosphate cytidylyltransferase; sequence MYNFVTLSIL…SCLSAPSSDT (225 aa). A 2-C-methyl-D-erythritol 2,4-cyclodiphosphate synthase region spans residues 226–386; sequence LSGVGFDVHA…NLKYFDWTKI (161 aa). Positions 232 and 234 each coordinate a divalent metal cation. Residues 232–234 and 258–259 contribute to the 4-CDP-2-C-methyl-D-erythritol 2-phosphate site; these read DVH and HS. An a divalent metal cation-binding site is contributed by His-266. Residues 280–282, 285–289, 356–359, Phe-363, and Arg-366 each bind 4-CDP-2-C-methyl-D-erythritol 2-phosphate; these read DIG, FPDND, and TTTE.

It in the N-terminal section; belongs to the IspD/TarI cytidylyltransferase family. IspD subfamily. The protein in the C-terminal section; belongs to the IspF family. The cofactor is a divalent metal cation.

The catalysed reaction is 2-C-methyl-D-erythritol 4-phosphate + CTP + H(+) = 4-CDP-2-C-methyl-D-erythritol + diphosphate. It carries out the reaction 4-CDP-2-C-methyl-D-erythritol 2-phosphate = 2-C-methyl-D-erythritol 2,4-cyclic diphosphate + CMP. It functions in the pathway isoprenoid biosynthesis; isopentenyl diphosphate biosynthesis via DXP pathway; isopentenyl diphosphate from 1-deoxy-D-xylulose 5-phosphate: step 2/6. The protein operates within isoprenoid biosynthesis; isopentenyl diphosphate biosynthesis via DXP pathway; isopentenyl diphosphate from 1-deoxy-D-xylulose 5-phosphate: step 4/6. Functionally, bifunctional enzyme that catalyzes the formation of 4-diphosphocytidyl-2-C-methyl-D-erythritol from CTP and 2-C-methyl-D-erythritol 4-phosphate (MEP) (IspD), and catalyzes the conversion of 4-diphosphocytidyl-2-C-methyl-D-erythritol 2-phosphate (CDP-ME2P) to 2-C-methyl-D-erythritol 2,4-cyclodiphosphate (ME-CPP) with a corresponding release of cytidine 5-monophosphate (CMP) (IspF). The protein is Bifunctional enzyme IspD/IspF of Sulfurimonas denitrificans (strain ATCC 33889 / DSM 1251) (Thiomicrospira denitrificans (strain ATCC 33889 / DSM 1251)).